Consider the following 680-residue polypeptide: Forkhead box protein P4 (680 aa).

Residues Met1–Gln17 show a composition bias toward polar residues. Residues Met1 to Met56 form a disordered region. 2 positions are modified to phosphoserine: Ser52 and Ser86. Glycyl lysine isopeptide (Lys-Gly) (interchain with G-Cter in SUMO2) cross-links involve residues Lys175 and Lys246. Positions Phe262 to His306 are disordered. The span at Thr276–Thr286 shows a compositional bias: polar residues. Residues Ser287–Pro298 are compositionally biased toward basic and acidic residues. The C2H2-type zinc finger occupies Gly307–His332. The interval Val349–Leu370 is leucine-zipper. Residue Lys378 forms a Glycyl lysine isopeptide (Lys-Gly) (interchain with G-Cter in SUMO2) linkage. The disordered stretch occupies residues Gly407–Lys445. Residues Arg467–Lys559 constitute a DNA-binding region (fork-head). Ser554 carries the phosphoserine modification. A disordered region spans residues Pro602–Ser680. Residues Ser617 to Val635 show a composition bias toward polar residues. Residues Arg668–Ser680 are compositionally biased toward acidic residues.

Forms homodimers and heterodimers with FOXP1 and FOXP2. Dimerization is required for DNA-binding.

The protein resides in the nucleus. Transcriptional repressor that represses lung-specific expression. This is Forkhead box protein P4 (FOXP4) from Homo sapiens (Human).